We begin with the raw amino-acid sequence, 796 residues long: DNA damage-responsive transcriptional repressor RPH1 (796 aa).

Positions 14 to 55 (VPVFKPTYEQFEDFYAYCKAINKYGMKSGVVKVIPPKEWKDK) constitute a JmjN domain. The 163-residue stretch at 193-355 (PEGLNVWNVA…IGKKAGKCHC (163 aa)) folds into the JmjC domain. Position 399 is a phosphothreonine (Thr-399). Ser-430, Ser-459, Ser-557, Ser-561, Ser-575, and Ser-584 each carry phosphoserine. A Bipartite nuclear localization signal motif is present at residues 455-471 (KRISSFQEQPLNKLLKR). Residues 599–692 (RQQHSQQHSF…DKEQGSSPLN (94 aa)) form a disordered region. Positions 601–621 (QHSQQHSFSTPSTVSNLSTSV) are enriched in polar residues. Residues 629-640 (NDIKTPHPERPN) are compositionally biased toward basic and acidic residues. Ser-652 carries the phosphoserine modification. Residues 654-669 (VETSKSNLILSKVAST) are compositionally biased toward polar residues. The segment covering 670 to 686 (RQEDSFTSRNDDLDKEQ) has biased composition (basic and acidic residues). Ser-689 carries the phosphoserine modification. A C2H2-type 1 zinc finger spans residues 709–732 (YICKECQRKFSSGHHLTRHKKSVH). The C2H2-type 2; atypical zinc-finger motif lies at 738 to 763 (HSCPKCGKRFKRRDHVLQHLNKKIPC). A disordered region spans residues 774–796 (IMNPTVQPQDGKAAINQQSTPLN).

In terms of processing, RAD53-dependent phosphorylated in response to DNA damage.

The protein localises to the nucleus. Transcriptional repressor of photolyase PHR1. Recognizes and binds the sequence AG(4) in the upstream repressing sequence of PHR1. Derepresses PHR1 transcription when phosphorylated. In Saccharomyces cerevisiae (strain ATCC 204508 / S288c) (Baker's yeast), this protein is DNA damage-responsive transcriptional repressor RPH1 (RPH1).